The following is a 517-amino-acid chain: Sterol 14-alpha demethylase CYP51C (517 aa).

The helical transmembrane segment at 10–30 (TLPLSVSIPLTTSIIIILSIV) threads the bilayer. Lanosterol is bound at residue Tyr-115. Residue Gly-300 coordinates itraconazole. Cys-458 contributes to the heme binding site.

It belongs to the cytochrome P450 family. Requires heme as cofactor.

It localises to the endoplasmic reticulum membrane. Its pathway is steroid metabolism; ergosterol biosynthesis. Its function is as follows. Together with cyp51A and cyp51B, encodes the sterol 14alpha-demethylase that plays a critical role in the third module of ergosterol biosynthesis pathway, being ergosterol the major sterol component in fungal membranes that participates in a variety of functions. Cyp51C does not seem to encode an active sterol 14-alpha-demethylase, but can impact indirectly on sterol 14alpha-demethylation, and is required for full virulence on host wheat ears, but not on Arabidopsis floral tissue or the fruits of apple and tomato. The third module or late pathway involves the ergosterol synthesis itself through consecutive reactions that mainly occur in the endoplasmic reticulum (ER) membrane. In filamentous fungi, during the initial step of this module, lanosterol (lanosta-8,24-dien-3beta-ol) can be metabolized to eburicol. Sterol 14alpha-demethylase catalyzes the three-step oxidative removal of the 14alpha-methyl group (C-32) of both these sterols in the form of formate, and converts eburicol and lanosterol to 14-demethyleburicol (4,4,24-trimethylergosta-8,14,24(28)-trienol) and 4,4-dimethyl-5alpha-cholesta-8,14,24-trien-3beta-ol, respectively, which are further metabolized by other enzymes in the pathway to ergosterol. In Gibberella zeae (strain ATCC MYA-4620 / CBS 123657 / FGSC 9075 / NRRL 31084 / PH-1) (Wheat head blight fungus), this protein is Sterol 14-alpha demethylase CYP51C.